We begin with the raw amino-acid sequence, 441 residues long: Phenylalanine-4-hydroxylase (441 aa).

The ACT domain occupies Phe23–Asn102. The Fe cation site is built by His273, His278, and Glu318.

It belongs to the biopterin-dependent aromatic amino acid hydroxylase family. In terms of assembly, homotetramer. Fe(2+) serves as cofactor.

It carries out the reaction (6R)-L-erythro-5,6,7,8-tetrahydrobiopterin + L-phenylalanine + O2 = (4aS,6R)-4a-hydroxy-L-erythro-5,6,7,8-tetrahydrobiopterin + L-tyrosine. The enzyme catalyses (6R)-L-erythro-5,6,7,8-tetrahydrobiopterin + L-tryptophan + O2 = 5-hydroxy-L-tryptophan + (4aS,6R)-4a-hydroxy-L-erythro-5,6,7,8-tetrahydrobiopterin. Its pathway is amino-acid degradation; L-phenylalanine degradation; acetoacetate and fumarate from L-phenylalanine: step 1/6. In terms of biological role, catalyzes the hydroxylation of L-phenylalanine. Hydroxylates L-tryptophan to 5-hydroxy-L-tryptophan but does not hydroxylate L-tyrosine to L-DOPA. It uses D-threo-tetrahydrodictyopterin (DH4), also known as dictyoperin, as a cofactor. The sequence is that of Phenylalanine-4-hydroxylase (pah) from Dictyostelium discoideum (Social amoeba).